A 127-amino-acid chain; its full sequence is Alpha-hordothionin (127 aa).

The first 18 residues, methionine 1–glycine 18, serve as a signal peptide directing secretion. Cystine bridges form between cysteine 21–cysteine 57, cysteine 22–cysteine 49, cysteine 30–cysteine 47, and cysteine 34–cysteine 43. Residues leucine 64–alanine 127 constitute a propeptide, acidic domain.

It belongs to the plant thionin (TC 1.C.44) family. 4 C-C subfamily.

It is found in the secreted. Thionins are small plant proteins which are toxic to animal cells. They seem to exert their toxic effect at the level of the cell membrane. Their precise function is not known. This Hordeum vulgare (Barley) protein is Alpha-hordothionin (THI1.1).